Here is a 252-residue protein sequence, read N- to C-terminus: Cyclic di-GMP binding protein VCA0042 (252 aa).

Positions 1 to 11 (MNSRPAEKIDN) are enriched in basic and acidic residues. The segment at 1-24 (MNSRPAEKIDNNDGQTETPRSKTV) is disordered. The span at 12–24 (NDGQTETPRSKTV) shows a compositional bias: polar residues. Residues 134-233 (QLRKEPRFEL…EEGRNNAKNL (100 aa)) enclose the PilZ domain.

This sequence belongs to the YcgR family. In terms of assembly, dimer.

The protein localises to the bacterial flagellum basal body. May act as a flagellar brake, regulating swimming and swarming in a bis-(3'-5') cyclic diguanylic acid (c-di-GMP)-dependent manner. Increasing levels of c-di-GMP lead to decreased motility (Potential). Binds bis-(3'-5') cyclic diguanylic acid (c-di-GMP) with a dissociation constant of 170 nM in the presence of 10 mM KCl and with 100 nM in its absence. Binds 1 to 2 c-di-GMP per subunit. Only 1 c-di-GMP is seen in the wild-type crystal, while 2 are seen in the mutant. Depending on the concentration of K(+) stoichiometries of 1:1, 1.43:1 and 2:1 are determined by isothermal titration calorimetry. In Vibrio cholerae serotype O1 (strain ATCC 39315 / El Tor Inaba N16961), this protein is Cyclic di-GMP binding protein VCA0042.